Consider the following 660-residue polypeptide: DNA mismatch repair protein MutL (660 aa).

Residues 408-436 form a disordered region; it reads DQTSASASVKHASRSQDENQLSEHPNLDF. The segment covering 425-436 has biased composition (polar residues); that stretch reads ENQLSEHPNLDF.

This sequence belongs to the DNA mismatch repair MutL/HexB family.

Functionally, this protein is involved in the repair of mismatches in DNA. It is required for dam-dependent methyl-directed DNA mismatch repair. May act as a 'molecular matchmaker', a protein that promotes the formation of a stable complex between two or more DNA-binding proteins in an ATP-dependent manner without itself being part of a final effector complex. The sequence is that of DNA mismatch repair protein MutL from Streptococcus uberis (strain ATCC BAA-854 / 0140J).